Consider the following 107-residue polypeptide: U1-lycotoxin-Ls1c (107 aa).

An N-terminal signal peptide occupies residues 1 to 20 (MMKVLVVVALLVTLISYSSS). The propeptide occupies 21–41 (EGIDDLEADELLSLMANEQTR). Cystine bridges form between Cys-44–Cys-59, Cys-51–Cys-68, Cys-58–Cys-86, and Cys-70–Cys-84.

This sequence belongs to the neurotoxin 19 (CSTX) family. 04 (U1-Lctx) subfamily. In terms of tissue distribution, expressed by the venom gland.

It localises to the secreted. This Lycosa singoriensis (Wolf spider) protein is U1-lycotoxin-Ls1c.